Here is a 736-residue protein sequence, read N- to C-terminus: Subtilisin-like protease SBT4.11 (736 aa).

A signal peptide spans 1-25 (MAKRGAFSSFHSFLIVLLFLNSVLA). A propeptide spans 26-113 (VTHGHQDKQV…VFPNKKLKLQ (88 aa)) (activation peptide). The region spanning 35–112 (VYIVYMGSLP…SVFPNKKLKL (78 aa)) is the Inhibitor I9 domain. The region spanning 117–579 (SWDFMGLKEG…AGHVDPIAAT (463 aa)) is the Peptidase S8 domain. Asp145 acts as the Charge relay system in catalysis. An N-linked (GlcNAc...) asparagine glycan is attached at Asn176. His200 (charge relay system) is an active-site residue. Asn215 and Asn223 each carry an N-linked (GlcNAc...) asparagine glycan. Residues 355-437 (KFPLVYGKSA…GLQKDDFESV (83 aa)) enclose the PA domain. Ser518 acts as the Charge relay system in catalysis. Asn555, Asn602, Asn638, Asn646, and Asn656 each carry an N-linked (GlcNAc...) asparagine glycan.

Belongs to the peptidase S8 family. The C-terminal propeptide is autocleaved.

It is found in the secreted. The protein is Subtilisin-like protease SBT4.11 of Arabidopsis thaliana (Mouse-ear cress).